Here is a 405-residue protein sequence, read N- to C-terminus: Arginine biosynthesis bifunctional protein ArgJ (405 aa).

Residues Thr-152, Lys-178, Thr-189, Glu-276, Asn-400, and Thr-405 each contribute to the substrate site. Thr-189 (nucleophile) is an active-site residue.

This sequence belongs to the ArgJ family. Heterotetramer of two alpha and two beta chains.

It localises to the cytoplasm. The enzyme catalyses N(2)-acetyl-L-ornithine + L-glutamate = N-acetyl-L-glutamate + L-ornithine. The catalysed reaction is L-glutamate + acetyl-CoA = N-acetyl-L-glutamate + CoA + H(+). It functions in the pathway amino-acid biosynthesis; L-arginine biosynthesis; L-ornithine and N-acetyl-L-glutamate from L-glutamate and N(2)-acetyl-L-ornithine (cyclic): step 1/1. It participates in amino-acid biosynthesis; L-arginine biosynthesis; N(2)-acetyl-L-ornithine from L-glutamate: step 1/4. In terms of biological role, catalyzes two activities which are involved in the cyclic version of arginine biosynthesis: the synthesis of N-acetylglutamate from glutamate and acetyl-CoA as the acetyl donor, and of ornithine by transacetylation between N(2)-acetylornithine and glutamate. The sequence is that of Arginine biosynthesis bifunctional protein ArgJ from Pseudomonas fluorescens (strain Pf0-1).